Here is a 189-residue protein sequence, read N- to C-terminus: UPF0200 protein Smar_1234 (189 aa).

ATP is bound at residue 10-17 (GMPGAGKS).

This sequence belongs to the UPF0200 family.

The polypeptide is UPF0200 protein Smar_1234 (Staphylothermus marinus (strain ATCC 43588 / DSM 3639 / JCM 9404 / F1)).